A 178-amino-acid polypeptide reads, in one-letter code: Acireductone dioxygenase (178 aa).

Residues His-100, His-102, Glu-106, and His-145 each contribute to the Fe(2+) site. His-100, His-102, Glu-106, and His-145 together coordinate Ni(2+).

It belongs to the acireductone dioxygenase (ARD) family. As to quaternary structure, monomer. Fe(2+) is required as a cofactor. The cofactor is Ni(2+).

The catalysed reaction is 1,2-dihydroxy-5-(methylsulfanyl)pent-1-en-3-one + O2 = 3-(methylsulfanyl)propanoate + CO + formate + 2 H(+). It carries out the reaction 1,2-dihydroxy-5-(methylsulfanyl)pent-1-en-3-one + O2 = 4-methylsulfanyl-2-oxobutanoate + formate + 2 H(+). The protein operates within amino-acid biosynthesis; L-methionine biosynthesis via salvage pathway; L-methionine from S-methyl-5-thio-alpha-D-ribose 1-phosphate: step 5/6. Catalyzes 2 different reactions between oxygen and the acireductone 1,2-dihydroxy-3-keto-5-methylthiopentene (DHK-MTPene) depending upon the metal bound in the active site. Fe-containing acireductone dioxygenase (Fe-ARD) produces formate and 2-keto-4-methylthiobutyrate (KMTB), the alpha-ketoacid precursor of methionine in the methionine recycle pathway. Ni-containing acireductone dioxygenase (Ni-ARD) produces methylthiopropionate, carbon monoxide and formate, and does not lie on the methionine recycle pathway. In Bacillus velezensis (strain DSM 23117 / BGSC 10A6 / LMG 26770 / FZB42) (Bacillus amyloliquefaciens subsp. plantarum), this protein is Acireductone dioxygenase.